Reading from the N-terminus, the 80-residue chain is U4-theraphotoxin-Spl1a (80 aa).

The N-terminal stretch at 1 to 21 (MKASLFAVIFGLVVLCACSFA) is a signal peptide. The propeptide occupies 22 to 50 (EDQFASPNELLKSMFVESTHELTPEVEGR). Cystine bridges form between Cys-52–Cys-66, Cys-59–Cys-71, and Cys-65–Cys-75. Leu-79 is modified (leucine amide).

It belongs to the neurotoxin 30 (phrixotoxin) family. As to expression, expressed by the venom gland.

The protein localises to the secreted. Its function is as follows. Probable ion channel inhibitor. Shows insecticidal activity when injected into mealworms. This chain is U4-theraphotoxin-Spl1a, found in Selenotypus plumipes (Australian featherleg tarantula).